A 398-amino-acid polypeptide reads, in one-letter code: tRNA-specific 2-thiouridylase MnmA (398 aa).

ATP-binding positions include 20-27 (AMSGGVDS) and Leu-46. The active-site Nucleophile is Cys-114. Residues Cys-114 and Cys-210 are joined by a disulfide bond. Gly-138 contributes to the ATP binding site. An interaction with tRNA region spans residues 160 to 162 (RDQ). Cys-210 functions as the Cysteine persulfide intermediate in the catalytic mechanism.

The protein belongs to the MnmA/TRMU family.

Its subcellular location is the cytoplasm. The catalysed reaction is S-sulfanyl-L-cysteinyl-[protein] + uridine(34) in tRNA + AH2 + ATP = 2-thiouridine(34) in tRNA + L-cysteinyl-[protein] + A + AMP + diphosphate + H(+). Functionally, catalyzes the 2-thiolation of uridine at the wobble position (U34) of tRNA, leading to the formation of s(2)U34. The polypeptide is tRNA-specific 2-thiouridylase MnmA (Brucella abortus (strain S19)).